The sequence spans 660 residues: DNA mismatch repair protein MutL (660 aa).

The protein belongs to the DNA mismatch repair MutL/HexB family.

In terms of biological role, this protein is involved in the repair of mismatches in DNA. It is required for dam-dependent methyl-directed DNA mismatch repair. May act as a 'molecular matchmaker', a protein that promotes the formation of a stable complex between two or more DNA-binding proteins in an ATP-dependent manner without itself being part of a final effector complex. The protein is DNA mismatch repair protein MutL of Streptococcus pyogenes serotype M1.